The sequence spans 428 residues: tRNA modification GTPase MnmE (428 aa).

The (6S)-5-formyl-5,6,7,8-tetrahydrofolate site is built by Arg-20, Glu-76, and Arg-116. Positions 212–351 constitute a TrmE-type G domain; that stretch reads GFEVAIVGAP…LVAAIGERLL (140 aa). K(+) is bound at residue Asn-222. Residues 222–227, 241–247, and 266–269 each bind GTP; these read NAGKST, SEIAGTT, and DTAG. Ser-226 contacts Mg(2+). Positions 241, 243, and 246 each coordinate K(+). Thr-247 is a Mg(2+) binding site. Residue Lys-428 participates in (6S)-5-formyl-5,6,7,8-tetrahydrofolate binding.

The protein belongs to the TRAFAC class TrmE-Era-EngA-EngB-Septin-like GTPase superfamily. TrmE GTPase family. As to quaternary structure, homodimer. Heterotetramer of two MnmE and two MnmG subunits. Requires K(+) as cofactor.

It localises to the cytoplasm. Functionally, exhibits a very high intrinsic GTPase hydrolysis rate. Involved in the addition of a carboxymethylaminomethyl (cmnm) group at the wobble position (U34) of certain tRNAs, forming tRNA-cmnm(5)s(2)U34. This is tRNA modification GTPase MnmE from Cereibacter sphaeroides (strain ATCC 17029 / ATH 2.4.9) (Rhodobacter sphaeroides).